A 337-amino-acid polypeptide reads, in one-letter code: tRNA N6-adenosine threonylcarbamoyltransferase (337 aa).

Fe cation contacts are provided by His111 and His115. Substrate contacts are provided by residues 134–138 (LVSGG), Asp167, Gly180, and Asn272. A Fe cation-binding site is contributed by Asp300.

This sequence belongs to the KAE1 / TsaD family. The cofactor is Fe(2+).

Its subcellular location is the cytoplasm. It carries out the reaction L-threonylcarbamoyladenylate + adenosine(37) in tRNA = N(6)-L-threonylcarbamoyladenosine(37) in tRNA + AMP + H(+). Its function is as follows. Required for the formation of a threonylcarbamoyl group on adenosine at position 37 (t(6)A37) in tRNAs that read codons beginning with adenine. Is involved in the transfer of the threonylcarbamoyl moiety of threonylcarbamoyl-AMP (TC-AMP) to the N6 group of A37, together with TsaE and TsaB. TsaD likely plays a direct catalytic role in this reaction. The polypeptide is tRNA N6-adenosine threonylcarbamoyltransferase (Nitrosomonas europaea (strain ATCC 19718 / CIP 103999 / KCTC 2705 / NBRC 14298)).